We begin with the raw amino-acid sequence, 534 residues long: Probable protein kinase UbiB (534 aa).

A helical membrane pass occupies residues 23–43 (DLLFDLPLPWFLLALRFALPW). Positions 125–492 (RFDIEPLASA…WHKRKDDWFL (368 aa)) constitute a Protein kinase domain. ATP contacts are provided by residues 131–139 (LASASVAQV) and K153. Residue D288 is the Proton acceptor of the active site. 2 helical membrane passes run 490–510 (WFLRLLGTAHLGGGAVLAAGG) and 512–532 (LHELGHWPAGIMIAVGLYLIV).

The protein belongs to the ABC1 family. UbiB subfamily.

It localises to the cell inner membrane. It participates in cofactor biosynthesis; ubiquinone biosynthesis [regulation]. Is probably a protein kinase regulator of UbiI activity which is involved in aerobic coenzyme Q (ubiquinone) biosynthesis. The protein is Probable protein kinase UbiB of Pseudomonas fluorescens (strain ATCC BAA-477 / NRRL B-23932 / Pf-5).